A 216-amino-acid chain; its full sequence is Oligoribonuclease (216 aa).

An Exonuclease domain is found at 6–171; sequence VVWMDCEMTG…ADIKESIREL (166 aa). The active site involves Tyr128.

Belongs to the oligoribonuclease family.

Its subcellular location is the cytoplasm. Functionally, 3'-to-5' exoribonuclease specific for small oligoribonucleotides. The chain is Oligoribonuclease from Nocardia farcinica (strain IFM 10152).